Consider the following 520-residue polypeptide: MLLVDVATASVDVGAMSSRLAKTARIADLLSRAGTEQDARLVAVTVAWLSGELPQRQIGVGWAALRSLPAPAAAPTLTVTAVDAVFSEIGAVAGKGSQARRAGLIAELFAAATDVEQTFLRRLLTGELRQGALIGVMADAVAKAADVPAARVRRAAMLAGDLPAVAAAVLAGGDAALARFTLQVGRPVGPMLAQTATGVADALDRLGGTAVFEAKLDGARVQIHRRGSDVSVYTRSLDDVTARLPEVVEAALALPVTDLIADAEAIALRPDGRPHRFQVTASRFGRAAARATQPLSVFMFDLLHVDGADLLDQPTSDRVRVLDDLVPAAHRVDRLVTDDGAAAQRFLEATLAAGHEGVMAKSPNAPYEAGRRGAGWLKVKPVHTLDLVVLAVEWGSGRRTGKLSNIHLGARDPATGGFVMLGKTFKGMTDAMLDWQTARFLELADPAAQPATSGRDPTDGHTVKVRPEQVVEIAFDGVQGSTRYPGGMALRFARVLRYRDDKSPAEADTVDTVRAFYEHG.

Residue Glu213 coordinates ATP. Lys215 functions as the N6-AMP-lysine intermediate in the catalytic mechanism. ATP contacts are provided by Arg220, Arg235, Glu264, Phe300, Arg372, and Lys378.

The protein belongs to the ATP-dependent DNA ligase family. Mg(2+) serves as cofactor.

The catalysed reaction is ATP + (deoxyribonucleotide)n-3'-hydroxyl + 5'-phospho-(deoxyribonucleotide)m = (deoxyribonucleotide)n+m + AMP + diphosphate.. In terms of biological role, DNA ligase that seals nicks in double-stranded DNA during DNA replication, DNA recombination and DNA repair. In Mycobacterium sp. (strain JLS), this protein is Probable DNA ligase.